The sequence spans 702 residues: Polyribonucleotide nucleotidyltransferase (702 aa).

Mg(2+) is bound by residues aspartate 485 and aspartate 491. In terms of domain architecture, KH spans 552–611 (PKTSTLQIDPEKIRDVIGAGGKVINKIIADTGVKIDIKEDGLVYVSSAESEGVKEAVKII). The S1 motif domain occupies 621 to 689 (GEIYLGKVTK…SQGRINLSRK (69 aa)).

The protein belongs to the polyribonucleotide nucleotidyltransferase family. Mg(2+) serves as cofactor.

The protein localises to the cytoplasm. It catalyses the reaction RNA(n+1) + phosphate = RNA(n) + a ribonucleoside 5'-diphosphate. Its function is as follows. Involved in mRNA degradation. Catalyzes the phosphorolysis of single-stranded polyribonucleotides processively in the 3'- to 5'-direction. This is Polyribonucleotide nucleotidyltransferase from Clostridium perfringens (strain ATCC 13124 / DSM 756 / JCM 1290 / NCIMB 6125 / NCTC 8237 / Type A).